The sequence spans 670 residues: Probable urocanate hydratase (670 aa).

NAD(+) contacts are provided by residues 126 to 127 (GG), glutamine 204, 250 to 252 (GMS), glutamate 270, 316 to 317 (NV), 338 to 342 (QTSLH), 349 to 350 (FY), tyrosine 398, and glycine 590.

Belongs to the urocanase family. Requires NAD(+) as cofactor.

The catalysed reaction is 4-imidazolone-5-propanoate = trans-urocanate + H2O. It functions in the pathway amino-acid degradation; L-histidine degradation into L-glutamate; N-formimidoyl-L-glutamate from L-histidine: step 2/3. The protein is Probable urocanate hydratase of Caenorhabditis elegans.